The chain runs to 691 residues: Proprotein convertase subtilisin/kexin type 9 (691 aa).

The first 30 residues, 1–30 (MGIRCSTWLRWPLSPQLLLLLLLCPTGSRA), serve as a signal peptide directing secretion. The propeptide occupies 31–151 (QDEDGDYEEL…IEEDSLVFAQ (121 aa)). Residue tyrosine 37 is modified to Sulfotyrosine. A Phosphoserine modification is found at serine 46. The Peptidase S8 domain occupies 154–441 (PWNLERIIPA…QRVLTPNRVA (288 aa)). Residues aspartate 185 and histidine 225 each act as charge relay system in the active site. Cystine bridges form between cysteine 222–cysteine 254 and cysteine 322–cysteine 357. Serine 385 serves as the catalytic Charge relay system. Positions 449–691 (ETGGQLLCRT…PSAKASWVHQ (243 aa)) are C-terminal domain. Disulfide bonds link cysteine 456–cysteine 526, cysteine 476–cysteine 525, and cysteine 485–cysteine 508. Residues 495–497 (RGD) carry the Cell attachment site motif. Asparagine 532 is a glycosylation site (N-linked (GlcNAc...) asparagine). Cystine bridges form between cysteine 533–cysteine 600, cysteine 551–cysteine 599, cysteine 561–cysteine 587, cysteine 607–cysteine 678, cysteine 625–cysteine 677, and cysteine 634–cysteine 653. Serine 687 is subject to Phosphoserine.

Belongs to the peptidase S8 family. In terms of assembly, monomer. Can self-associate to form dimers and higher multimers which may have increased LDLR degrading activity. The precursor protein but not the mature protein may form multimers. Interacts with APOB, VLDLR, LRP8/APOER2 and BACE1. The full-length immature form (pro-PCSK9) interacts with SCNN1A, SCNN1B and SCNN1G. The pro-PCSK9 form (via C-terminal domain) interacts with LDLR. Interacts (via the C-terminal domain) with ANXA2 (via repeat Annexin 1); the interaction inhibits the degradation of LDLR. Ca(2+) is required as a cofactor. Cleavage by furin and PCSK5 generates a truncated inactive protein that is unable to induce LDLR degradation. In terms of processing, undergoes autocatalytic cleavage in the endoplasmic reticulum to release the propeptide from the N-terminus and the cleavage of the propeptide is strictly required for its maturation and activation. The cleaved propeptide however remains associated with the catalytic domain through non-covalent interactions, preventing potential substrates from accessing its active site. As a result, it is secreted from cells as a propeptide-containing, enzymatically inactive protein. Post-translationally, phosphorylation protects the propeptide against proteolysis. In terms of tissue distribution, highly expressed in 12-day embryo. In the adult, strongly expressed in liver, small intestine, jejunum, and to a lesser extent in kidney, lung, spleen and thymus. Expression in the liver is up-regulated following partial hepatectomy.

The protein localises to the cytoplasm. It localises to the secreted. Its subcellular location is the endosome. The protein resides in the lysosome. It is found in the cell surface. The protein localises to the endoplasmic reticulum. It localises to the golgi apparatus. Its activity is regulated as follows. Its proteolytic activity is autoinhibited by the non-covalent binding of the propeptide to the catalytic domain. Inhibited by EGTA. Crucial player in the regulation of plasma cholesterol homeostasis. Binds to low-density lipid receptor family members: low density lipoprotein receptor (LDLR), very low density lipoprotein receptor (VLDLR), apolipoprotein E receptor (LRP1/APOER) and apolipoprotein receptor 2 (LRP8/APOER2), and promotes their degradation in intracellular acidic compartments. Acts via a non-proteolytic mechanism to enhance the degradation of the hepatic LDLR through a clathrin LDLRAP1/ARH-mediated pathway. May prevent the recycling of LDLR from endosomes to the cell surface or direct it to lysosomes for degradation. Can induce ubiquitination of LDLR leading to its subsequent degradation. Inhibits intracellular degradation of APOB via the autophagosome/lysosome pathway in a LDLR-independent manner. Involved in the disposal of non-acetylated intermediates of BACE1 in the early secretory pathway. Inhibits epithelial Na(+) channel (ENaC)-mediated Na(+) absorption by reducing ENaC surface expression primarily by increasing its proteasomal degradation. Regulates neuronal apoptosis via modulation of LRP8/APOER2 levels and related anti-apoptotic signaling pathways. The sequence is that of Proprotein convertase subtilisin/kexin type 9 (Pcsk9) from Rattus norvegicus (Rat).